The chain runs to 929 residues: ATP-dependent DNA helicase PIF1 (929 aa).

The transit peptide at 1–52 directs the protein to the mitochondrion; that stretch reads MLRRLLQPAYNVALSGTSASTLPRKSASVGLVRTALMPVDYNAGALFCAMRF. The segment at 55–89 is disordered; that stretch reads GTEKERKREPKRGSKRRSKATTTLSTPTDAQTSVT. The segment covering 56–66 has biased composition (basic and acidic residues); it reads TEKERKREPKR. A compositionally biased stretch (polar residues) spans 74 to 89; the sequence is ATTTLSTPTDAQTSVT. 302–309 serves as a coordination point for ATP; that stretch reads GSAGTGKT. The DNA-binding element occupies 776–796; that stretch reads HLLYVAMSRVRNPEQLSMSSF. The segment at 902 to 929 is disordered; it reads HERRQKKMAVEGAKQTDTTKASSGESLE. A compositionally biased stretch (polar residues) spans 916–929; sequence QTDTTKASSGESLE.

This sequence belongs to the helicase family. PIF1 subfamily. Monomer. Requires Mg(2+) as cofactor.

It localises to the mitochondrion. The enzyme catalyses Couples ATP hydrolysis with the unwinding of duplex DNA at the replication fork by translocating in the 5'-3' direction. This creates two antiparallel DNA single strands (ssDNA). The leading ssDNA polymer is the template for DNA polymerase III holoenzyme which synthesizes a continuous strand.. The catalysed reaction is ATP + H2O = ADP + phosphate + H(+). DNA-dependent ATPase and probable 5'-3' DNA helicase required for the maintenance of mitochondrial (kinetoplast) genome stability. Essential for replication of kinetoplast minicircles. Involved in the segregation of minicircle progeny. In Trypanosoma brucei brucei (strain 927/4 GUTat10.1), this protein is ATP-dependent DNA helicase PIF1.